A 1456-amino-acid chain; its full sequence is Sterol 3-beta-glucosyltransferase (1456 aa).

Over residues 1–12 the composition is skewed to basic and acidic residues; the sequence is MASQDRGSDRTS. Positions 1–229 are disordered; that stretch reads MASQDRGSDR…RSPAAAATGE (229 aa). A compositionally biased stretch (basic residues) spans 13 to 22; that stretch reads RRLTKKRKDG. Residues 23 to 48 are compositionally biased toward basic and acidic residues; the sequence is KKPMRDVSLDMPERFKDGDDAHEDVT. Composition is skewed to polar residues over residues 54–63 and 109–123; these read HTMSMNQSIF and RLSTANDFQKTSGQT. The GRAM 1 domain maps to 236 to 283; that stretch reads KRIQHIFEFAQEEEVISEYPCWLLQSILLQGYMYITQKHICFYAYIPK. Residues 287 to 384 form the PH domain; it reads DVSKTGYLSK…WVKSIQKVIF (98 aa). Disordered regions lie at residues 500–612 and 631–691; these read LSPL…TASA and NAFS…TRLS. Over residues 510–523 the composition is skewed to low complexity; sequence RSSMSDISVRSSVD. Basic and acidic residues-rich tracts occupy residues 524-536, 544-557, and 571-584; these read ANRKNRDVRRSMD, WSLEGRRLSHEAHR, and RVGDRSPKSPRATD. Polar residues-rich tracts occupy residues 585–612 and 631–650; these read SDSATFSLDPGTESSAAIQSMDDSTASA and NAFSNGVNMSAHSQDTTRSS. Residues 774 to 840 form the GRAM 2 domain; the sequence is DNFREHFAFR…KDIENVNKEK (67 aa). UDP-alpha-D-glucose-binding residues include serine 966, arginine 967, aspartate 969, alanine 1269, histidine 1271, histidine 1284, serine 1287, glycine 1288, threonine 1289, aspartate 1308, and glutamine 1309.

The protein belongs to the glycosyltransferase 28 family.

Its subcellular location is the cytoplasm. The protein resides in the preautophagosomal structure membrane. The catalysed reaction is a sterol + UDP-alpha-D-glucose = a sterol 3-beta-D-glucoside + UDP + H(+). It catalyses the reaction ergosterol + UDP-alpha-D-glucose = ergosteryl 3-beta-D-glucoside + UDP + H(+). In terms of biological role, sterol glycosyltransferase responsible for the glycosylation of ergosterol to form ergosterol-glucoside. This chain is Sterol 3-beta-glucosyltransferase, found in Leptosphaeria maculans (Blackleg fungus).